A 196-amino-acid chain; its full sequence is Pyridoxine/pyridoxamine 5'-phosphate oxidase (196 aa).

Substrate is bound at residue K49. The FMN site is built by K66 and Q88. Substrate-binding residues include Y106, R110, and S114. Residues 123 to 124 (QS) and W168 each bind FMN. 174 to 176 (RLH) contributes to the substrate binding site. R178 is an FMN binding site.

This sequence belongs to the pyridoxamine 5'-phosphate oxidase family. Homodimer. Requires FMN as cofactor.

The catalysed reaction is pyridoxamine 5'-phosphate + O2 + H2O = pyridoxal 5'-phosphate + H2O2 + NH4(+). The enzyme catalyses pyridoxine 5'-phosphate + O2 = pyridoxal 5'-phosphate + H2O2. Its pathway is cofactor metabolism; pyridoxal 5'-phosphate salvage; pyridoxal 5'-phosphate from pyridoxamine 5'-phosphate: step 1/1. The protein operates within cofactor metabolism; pyridoxal 5'-phosphate salvage; pyridoxal 5'-phosphate from pyridoxine 5'-phosphate: step 1/1. In terms of biological role, catalyzes the oxidation of either pyridoxine 5'-phosphate (PNP) or pyridoxamine 5'-phosphate (PMP) into pyridoxal 5'-phosphate (PLP). In Bdellovibrio bacteriovorus (strain ATCC 15356 / DSM 50701 / NCIMB 9529 / HD100), this protein is Pyridoxine/pyridoxamine 5'-phosphate oxidase.